The following is a 72-amino-acid chain: UPF0150 protein jhp_0960 (72 aa).

The protein belongs to the UPF0150 family.

The chain is UPF0150 protein jhp_0960 from Helicobacter pylori (strain J99 / ATCC 700824) (Campylobacter pylori J99).